Here is a 209-residue protein sequence, read N- to C-terminus: Probable glutathione peroxidase 8-A (209 aa).

A helical membrane pass occupies residues 18–40 (VSVVFLSMLLCTGILCVLQLGFL). The active site involves C79.

Belongs to the glutathione peroxidase family.

The protein resides in the membrane. The catalysed reaction is 2 glutathione + H2O2 = glutathione disulfide + 2 H2O. The sequence is that of Probable glutathione peroxidase 8-A (gpx8-a) from Xenopus laevis (African clawed frog).